The sequence spans 163 residues: MISKIKELFASFMLLELVKGMALTGRYFFARKVTVQFPEERTPISPRFRGLHALRRYPNGEERCIACKLCEAVCPAMAITIESEQREDNTRRTTRYDIDLTKCIFCGFCEESCPVDSIVETRIFDYHGEKRGDLIYTKPMLLAVGDKYEEQIAADRAADARYR.

2 consecutive 4Fe-4S ferredoxin-type domains span residues 54-84 and 94-123; these read LRRY…IESE and TRYD…ETRI. 8 residues coordinate [4Fe-4S] cluster: C64, C67, C70, C74, C103, C106, C109, and C113.

This sequence belongs to the complex I 23 kDa subunit family. In terms of assembly, NDH-1 is composed of 14 different subunits. Subunits NuoA, H, J, K, L, M, N constitute the membrane sector of the complex. Requires [4Fe-4S] cluster as cofactor.

Its subcellular location is the cell inner membrane. The enzyme catalyses a quinone + NADH + 5 H(+)(in) = a quinol + NAD(+) + 4 H(+)(out). NDH-1 shuttles electrons from NADH, via FMN and iron-sulfur (Fe-S) centers, to quinones in the respiratory chain. The immediate electron acceptor for the enzyme in this species is believed to be ubiquinone. Couples the redox reaction to proton translocation (for every two electrons transferred, four hydrogen ions are translocated across the cytoplasmic membrane), and thus conserves the redox energy in a proton gradient. This is NADH-quinone oxidoreductase subunit I from Methylobacillus flagellatus (strain ATCC 51484 / DSM 6875 / VKM B-1610 / KT).